The sequence spans 78 residues: Large ribosomal subunit protein bL28 (78 aa).

Residues 1-28 form a disordered region; that stretch reads MSAYCQVTGRKPGFGKQVSHSHRHTSRR.

The protein belongs to the bacterial ribosomal protein bL28 family.

The chain is Large ribosomal subunit protein bL28 from Corynebacterium urealyticum (strain ATCC 43042 / DSM 7109).